The chain runs to 65 residues: MPKMKTKKSASKRFQVRGSGSIKRGQAFKRHILTKKTTKNKRQLRGSAAVHETNVASVKAMMPFA.

A compositionally biased stretch (basic residues) spans 1 to 15 (MPKMKTKKSASKRFQ). A disordered region spans residues 1–27 (MPKMKTKKSASKRFQVRGSGSIKRGQA).

Belongs to the bacterial ribosomal protein bL35 family.

This Bordetella petrii (strain ATCC BAA-461 / DSM 12804 / CCUG 43448) protein is Large ribosomal subunit protein bL35.